Reading from the N-terminus, the 87-residue chain is MSQAEFEKAAEEVKNLKTKPADAEMLFIYSHYKQATVGDVNTERPGMLDLKGKAKWDAWNELKGTSKESAMRAYVDKVEELKQKYGI.

Residue Ser2 is modified to N-acetylserine. The ACB domain maps to 2–87; the sequence is SQAEFEKAAE…VEELKQKYGI (86 aa). Lys8 carries the N6-acetyllysine; alternate modification. Lys8 is modified (N6-succinyllysine; alternate). Lys14 contributes to the an acyl-CoA binding site. Position 17 is an N6-succinyllysine (Lys17). Residue Lys19 is modified to N6-acetyllysine. Tyr29 carries the post-translational modification Phosphotyrosine. An acyl-CoA is bound by residues 29-33, Lys51, Lys55, and Tyr74; that span reads YSHYK. Lys51 is subject to N6-acetyllysine. At Lys55 the chain carries N6-acetyllysine; alternate. N6-succinyllysine; alternate is present on Lys55. Lys55 carries the N6-(2-hydroxyisobutyryl)lysine; alternate modification. The residue at position 55 (Lys55) is an N6-malonyllysine; alternate. Lys77 carries the N6-acetyllysine; alternate modification. Lys77 bears the N6-succinyllysine; alternate mark.

This sequence belongs to the ACBP family. As to quaternary structure, monomer.

Its subcellular location is the endoplasmic reticulum. The protein resides in the golgi apparatus. In terms of biological role, binds medium- and long-chain acyl-CoA esters with very high affinity and may function as an intracellular carrier of acyl-CoA esters. It is also able to displace diazepam from the benzodiazepine (BZD) recognition site located on the GABA type A receptor. It is therefore possible that this protein also acts as a neuropeptide to modulate the action of the GABA receptor. This Oryctolagus cuniculus (Rabbit) protein is Acyl-CoA-binding protein (DBI).